A 707-amino-acid polypeptide reads, in one-letter code: Transcription termination factor Rho (707 aa).

Disordered regions lie at residues 1–38 (MSDTTDLMGARVEETAAAPATDASAPATGAGSRRRRGT) and 76–321 (QAAG…DEIQ). 2 stretches are compositionally biased toward low complexity: residues 16–31 (AAAPATDASAPATGAG) and 76–93 (QAAGGAPAKAAPAAADTA). Basic and acidic residues predominate over residues 107–132 (RTGDEAPAEKAEKAGKADKKADKAAA). Positions 153–163 (ASAEQAAPADD) are enriched in low complexity. Polar residues predominate over residues 176–188 (DAGSPSATDTTVA). Over residues 203–213 (QQSQGHQQGQG) the composition is skewed to low complexity. The segment covering 215 to 265 (ARSDAEGGDGRRRDRRDRGDRDRGDRGDRGDRGDRGDRGERGRDRRNKGDD) has biased composition (basic and acidic residues). Residues 301 to 315 (RRGRRGRYRDRRGRR) show a composition bias toward basic residues. A Rho RNA-BD domain is found at 331 to 406 (LIPVAGILDI…VRLDSVNGMA (76 aa)). Residues 449-454 (GKGQRG), 461-466 (KTGKTM), and arginine 492 contribute to the ATP site.

This sequence belongs to the Rho family. Homohexamer. The homohexamer assembles into an open ring structure.

Its function is as follows. Facilitates transcription termination by a mechanism that involves Rho binding to the nascent RNA, activation of Rho's RNA-dependent ATPase activity, and release of the mRNA from the DNA template. The chain is Transcription termination factor Rho from Streptomyces lividans.